The following is a 305-amino-acid chain: NDP-polyphosphate phosphotransferase 1 (305 aa).

It belongs to the polyphosphate kinase 2 (PPK2) family. Class I subfamily.

It carries out the reaction [phosphate](n) + ATP = [phosphate](n+1) + ADP. The catalysed reaction is [phosphate](n) + CTP = [phosphate](n+1) + CDP. The enzyme catalyses [phosphate](n) + GTP = [phosphate](n+1) + GDP. It catalyses the reaction [phosphate](n) + UTP = [phosphate](n+1) + UDP. With respect to regulation, shows little dependence on metals. Its function is as follows. Uses inorganic polyphosphate (polyP) as a donor to convert NDP to NTP. PolyP hydrolysis is slightly faster with GDP, but it can also use ADP, CDP and UDP. The protein is NDP-polyphosphate phosphotransferase 1 of Ruegeria pomeroyi (strain ATCC 700808 / DSM 15171 / DSS-3) (Silicibacter pomeroyi).